Here is a 604-residue protein sequence, read N- to C-terminus: Aspartate--tRNA(Asp/Asn) ligase (604 aa).

An L-aspartate-binding site is contributed by Glu-169. The segment at 193–196 (QLFK) is aspartate. Arg-215 contributes to the L-aspartate binding site. ATP contacts are provided by residues 215-217 (RDE) and Gln-224. An L-aspartate-binding site is contributed by His-456. Glu-490 lines the ATP pocket. L-aspartate is bound at residue Arg-497. Residue 542–545 (GWDR) participates in ATP binding. Positions 571–604 (PLTGAPAPITAQQRKEAGVDAQPEPKQAEAEPEA) are disordered.

This sequence belongs to the class-II aminoacyl-tRNA synthetase family. Type 1 subfamily. In terms of assembly, homodimer.

Its subcellular location is the cytoplasm. It catalyses the reaction tRNA(Asx) + L-aspartate + ATP = L-aspartyl-tRNA(Asx) + AMP + diphosphate. Functionally, aspartyl-tRNA synthetase with relaxed tRNA specificity since it is able to aspartylate not only its cognate tRNA(Asp) but also tRNA(Asn). Reaction proceeds in two steps: L-aspartate is first activated by ATP to form Asp-AMP and then transferred to the acceptor end of tRNA(Asp/Asn). The polypeptide is Aspartate--tRNA(Asp/Asn) ligase (Micrococcus luteus (strain ATCC 4698 / DSM 20030 / JCM 1464 / CCM 169 / CCUG 5858 / IAM 1056 / NBRC 3333 / NCIMB 9278 / NCTC 2665 / VKM Ac-2230) (Micrococcus lysodeikticus)).